A 586-amino-acid chain; its full sequence is MATSGVEKSSKKKTEKKLAAREEAKLLAGFMGVMNNMRKQRTLCDVILMVQERKIPAHRVVLAAASHFFNLMFTTNMLESKSFEVELKDAEPDIIEQLVEFAYTARISVNSNNVQSLLDAANQYQIEPVKKMCVDFLKEQVDASNCLGISVLAECLDCPELKSTADDFIHQHFTEVYKTDEFLQLDVKRVTHLLSQDTLTVRAEDQVYDAAVRWLKYDEPNRQPFMVDILAKVRFPLISKNFLSKTVQAEPLIQDNPECLKMVISGMRYHLLSPEDREELAGGTRPRRKKHDYRIALFGGSQPQSCRYFNPKDYSWTDIRCPFEKRRDAACVFWDNVVYILGGSQLFPIKRMDCYNVVKDSWYSKLGPPTPRDSLAACAAEGKIYTSGGSEVGNSALYLFECYDTRTESWHTKPSMLTQRCSHGMVEANGLIYVCGGSLGNNVSGRVLSSCEVYDPATETWTELCSMIEPRKNHGLVFVKDKIFAVGGQNGLGGLDNVEYYDIKLNEWKMVSPMPWRGVTVKCAAVGSVIYVLAGFQGVGRLGHILEYNTETDKWVANSKVRAFPVTSCLICVVDTCGANEETLET.

Residues 44–111 (CDVILMVQER…AYTARISVNS (68 aa)) form the BTB domain. One can recognise a BACK domain in the interval 146-248 (CLGISVLAEC…SKNFLSKTVQ (103 aa)). 6 Kelch repeats span residues 294–336 (RIAL…FWDN), 337–382 (VVYI…AAEG), 383–430 (KIYT…EANG), 431–481 (LIYV…FVKD), 483–528 (IFAV…AVGS), and 530–575 (IYVL…CVVD).

In terms of assembly, homodimer. Component of the BCR(KLHL7) E3 ubiquitin ligase complex, at least composed of CUL3 and KLHL7 and RBX1.

The protein localises to the nucleus. It localises to the cytoplasm. It functions in the pathway protein modification; protein ubiquitination. Functionally, substrate-specific adapter of a BCR (BTB-CUL3-RBX1) E3 ubiquitin ligase complex. The BCR(KLHL7) complex acts by mediating ubiquitination and subsequent degradation of substrate proteins. Probably mediates 'Lys-48'-linked ubiquitination. The sequence is that of Kelch-like protein 7 (Klhl7) from Rattus norvegicus (Rat).